We begin with the raw amino-acid sequence, 410 residues long: 23S rRNA (uracil(747)-C(5))-methyltransferase (410 aa).

Residues C61, C67, C70, and C137 each coordinate [4Fe-4S] cluster. S-adenosyl-L-methionine is bound by residues Q253, Y279, E300, and D341. C367 acts as the Nucleophile in catalysis.

It belongs to the class I-like SAM-binding methyltransferase superfamily. RNA M5U methyltransferase family.

It catalyses the reaction uridine(747) in 23S rRNA + S-adenosyl-L-methionine = 5-methyluridine(747) in 23S rRNA + S-adenosyl-L-homocysteine + H(+). With respect to regulation, activated by magnesium ions. Catalyzes the formation of 5-methyl-uridine at position equivalent to 747 (m5U747) in 23S rRNA (m5U859 in the P.abyssi numbering). The chain is 23S rRNA (uracil(747)-C(5))-methyltransferase from Pyrococcus abyssi (strain GE5 / Orsay).